We begin with the raw amino-acid sequence, 207 residues long: Ribonuclease HII (207 aa).

Residues 20–207 (QLFAGVDEVG…KPVKRVLGIE (188 aa)) form the RNase H type-2 domain. The a divalent metal cation site is built by Asp-26, Glu-27, and Asp-118.

The protein belongs to the RNase HII family. It depends on Mn(2+) as a cofactor. Mg(2+) is required as a cofactor.

Its subcellular location is the cytoplasm. It carries out the reaction Endonucleolytic cleavage to 5'-phosphomonoester.. Functionally, endonuclease that specifically degrades the RNA of RNA-DNA hybrids. This Aliivibrio fischeri (strain ATCC 700601 / ES114) (Vibrio fischeri) protein is Ribonuclease HII.